The chain runs to 466 residues: Ribulose bisphosphate carboxylase large chain (466 aa).

At K5 the chain carries N6,N6,N6-trimethyllysine. Residues N114 and T164 each contribute to the substrate site. K166 functions as the Proton acceptor in the catalytic mechanism. Residue K168 coordinates substrate. The Mg(2+) site is built by K192, D194, and E195. Residue K192 is modified to N6-carboxylysine. H285 functions as the Proton acceptor in the catalytic mechanism. Residues R286, H318, and S370 each coordinate substrate.

Belongs to the RuBisCO large chain family. Type I subfamily. Heterohexadecamer of 8 large chains and 8 small chains; disulfide-linked. The disulfide link is formed within the large subunit homodimers. Mg(2+) serves as cofactor. The disulfide bond which can form in the large chain dimeric partners within the hexadecamer appears to be associated with oxidative stress and protein turnover.

It is found in the plastid. It localises to the chloroplast. The catalysed reaction is 2 (2R)-3-phosphoglycerate + 2 H(+) = D-ribulose 1,5-bisphosphate + CO2 + H2O. It carries out the reaction D-ribulose 1,5-bisphosphate + O2 = 2-phosphoglycolate + (2R)-3-phosphoglycerate + 2 H(+). Functionally, ruBisCO catalyzes two reactions: the carboxylation of D-ribulose 1,5-bisphosphate, the primary event in carbon dioxide fixation, as well as the oxidative fragmentation of the pentose substrate in the photorespiration process. Both reactions occur simultaneously and in competition at the same active site. The sequence is that of Ribulose bisphosphate carboxylase large chain from Caltha palustris (Yellow marsh marigold).